The chain runs to 456 residues: Argininosuccinate lyase (456 aa).

The protein belongs to the lyase 1 family. Argininosuccinate lyase subfamily.

Its subcellular location is the cytoplasm. The enzyme catalyses 2-(N(omega)-L-arginino)succinate = fumarate + L-arginine. Its pathway is amino-acid biosynthesis; L-arginine biosynthesis; L-arginine from L-ornithine and carbamoyl phosphate: step 3/3. The polypeptide is Argininosuccinate lyase (Listeria innocua serovar 6a (strain ATCC BAA-680 / CLIP 11262)).